We begin with the raw amino-acid sequence, 380 residues long: 3-dehydroquinate synthase (380 aa).

Belongs to the archaeal-type DHQ synthase family.

It catalyses the reaction 2-amino-2,3,7-trideoxy-D-lyxo-hept-6-ulosonate + NAD(+) + H2O = 3-dehydroquinate + NH4(+) + NADH + H(+). Catalyzes the oxidative deamination and cyclization of 2-amino-3,7-dideoxy-D-threo-hept-6-ulosonic acid (ADH) to yield 3-dehydroquinate (DHQ), which is fed into the canonical shikimic pathway of aromatic amino acid biosynthesis. This chain is 3-dehydroquinate synthase, found in Methanosarcina barkeri (strain Fusaro / DSM 804).